A 219-amino-acid polypeptide reads, in one-letter code: tRNA (guanine-N(7)-)-methyltransferase (219 aa).

Residues glutamate 44, aspartate 69, glutamate 102, and asparagine 125 each coordinate S-adenosyl-L-methionine. Substrate contacts are provided by lysine 129 and aspartate 161.

This sequence belongs to the class I-like SAM-binding methyltransferase superfamily. TrmB family.

The catalysed reaction is guanosine(46) in tRNA + S-adenosyl-L-methionine = N(7)-methylguanosine(46) in tRNA + S-adenosyl-L-homocysteine. Its pathway is tRNA modification; N(7)-methylguanine-tRNA biosynthesis. Catalyzes the formation of N(7)-methylguanine at position 46 (m7G46) in tRNA. This Clostridium perfringens (strain SM101 / Type A) protein is tRNA (guanine-N(7)-)-methyltransferase.